The sequence spans 1078 residues: Teashirt homolog 1-A (1078 aa).

3 disordered regions span residues 1–110 (MPRR…NVSY), 140–197 (KSNE…SNSA), and 271–300 (GHYR…MEME). A compositionally biased stretch (acidic residues) spans 26-36 (IEEDNLEDDGL). Positions 57–71 (PSYQNSPISSATNQD) are enriched in polar residues. The segment covering 143-197 (ENSSPTTNTNKSSMSEATGSTSDPDTPTTIPSSSCTNTSTSISVTTSNSTNSNSA) has biased composition (low complexity). C2H2-type zinc fingers lie at residues 248 to 272 (FKCK…ETGH) and 309 to 333 (LKCM…KTKH). Residues 271–286 (GHYRDDNKDRDAERTK) show a composition bias toward basic and acidic residues. The disordered stretch occupies residues 365 to 394 (DSPEQAGISPGASVSESAKDPKAANPYVTP). The C2H2-type 3 zinc-finger motif lies at 418–442 (LKCMECGSSHDSLQQLTAHMMVTGH). Disordered regions lie at residues 472-524 (LPPT…ENED) and 850-877 (RLTP…EAMD). Residues 497-524 (HSEEKKDPEKEKVNNCEVEKRIKEENED) show a composition bias toward basic and acidic residues. The span at 853–862 (PKSSTPSTVS) shows a compositional bias: polar residues. A DNA-binding region (homeobox) is located at residues 885-955 (RKGRQSNWNP…NVKYQLRRTG (71 aa)). 2 C2H2-type zinc fingers span residues 970–992 (FFCN…LETH) and 1038–1061 (FQCK…SKTH).

Belongs to the teashirt C2H2-type zinc-finger protein family.

The protein localises to the nucleus. Its function is as follows. Probable transcriptional regulator involved in developmental processes. May act as a transcriptional repressor (Potential). Involved in two major neuronal regionalization processes: primary anteroposterior (AP) axis patterning of the CNS and segmentation of the cranial neuronal crest (CNS) development. The sequence is that of Teashirt homolog 1-A (tshz1-a) from Xenopus laevis (African clawed frog).